Here is a 962-residue protein sequence, read N- to C-terminus: Leucine--tRNA ligase (962 aa).

Residues 68-79 carry the 'HIGH' region motif; it reads PYPSGAGLHVGH. A disordered region spans residues 559–582; the sequence is DYSPRTFDPDDANTSPETPLSRNE. Positions 570–579 are enriched in polar residues; the sequence is ANTSPETPLS. The 'KMSKS' region motif lies at 733 to 737; that stretch reads KMGKS. An ATP-binding site is contributed by K736.

Belongs to the class-I aminoacyl-tRNA synthetase family.

It is found in the cytoplasm. The catalysed reaction is tRNA(Leu) + L-leucine + ATP = L-leucyl-tRNA(Leu) + AMP + diphosphate. The chain is Leucine--tRNA ligase from Streptomyces avermitilis (strain ATCC 31267 / DSM 46492 / JCM 5070 / NBRC 14893 / NCIMB 12804 / NRRL 8165 / MA-4680).